We begin with the raw amino-acid sequence, 395 residues long: MRVVAAMSGGVDSAVAASRALEAGHEVIGVHLALSQSPEAVRAGSRGCCSLEDSADARRVADKLGIPFYVWDFSDRFKADVIDDFVDSYAIGETPNPCLRCNEKIKFEALLDRSIALGFDAVVTGHYARLHDGVMRRGVDANKDQSYVLGVLTDEQLAHCMFPVGDTIKPEIREEAKDHGFGVASKPDSHDICFIPDGQTQAFLGKKIGLRPGLMKDQDGSTVAEHDGVYGFTIGQRKGLGLPREGLDGKPRYVTDIDAATGTVTIGQRDDLRVGGITADRLKRLDPAVHGREFECEVQVRAHGGVVPATARLVDDPERTTPAGRVKKEDESPWRLELDLHEPLQGVARGQAAVVYQPDADGDILLGSGTIRATAPWSDAGAAGTAGERATPAEA.

ATP is bound by residues 6–13 (AMSGGVDS) and Leu32. Catalysis depends on Cys101, which acts as the Nucleophile. An intrachain disulfide couples Cys101 to Cys193. Gly125 serves as a coordination point for ATP. An interaction with tRNA region spans residues 143-145 (KDQ). Cys193 acts as the Cysteine persulfide intermediate in catalysis.

The protein belongs to the MnmA/TRMU family.

It is found in the cytoplasm. The catalysed reaction is S-sulfanyl-L-cysteinyl-[protein] + uridine(34) in tRNA + AH2 + ATP = 2-thiouridine(34) in tRNA + L-cysteinyl-[protein] + A + AMP + diphosphate + H(+). Its function is as follows. Catalyzes the 2-thiolation of uridine at the wobble position (U34) of tRNA, leading to the formation of s(2)U34. This Corynebacterium jeikeium (strain K411) protein is tRNA-specific 2-thiouridylase MnmA.